A 329-amino-acid polypeptide reads, in one-letter code: MPCPRPFWLRHSRAPQGSGPSSPGSLSAPRSPSRGEDQEEEEEEEGDGSPGSGPILPPASPVECLICVSSFDGVFKLPKRLDCGHVFCLECLARLSLATAGGGNAVACPVCRAPTRLAPRRGLPALPTQSGLLPRDARAPPSRQGSVRFDRRRGLLYLRPPPPPPGPRKARAPPPPPPLRLGRPLSRRLSLASPAWVFNAAVALAVLVAAGLVVSGVYIFFLIPHATSSGPPRPQLVALAPAPGFSWFPPRPPPGSPWAPAWTPRPTGPDLDTALPGTAEDALEPEAGPEDPAEAERTLDRRSDGTWGTEAGPGWAPWPRGARRLWGSQ.

A disordered region spans residues 1 to 55 (MPCPRPFWLRHSRAPQGSGPSSPGSLSAPRSPSRGEDQEEEEEEEGDGSPGSGPI). A compositionally biased stretch (low complexity) spans 14–32 (APQGSGPSSPGSLSAPRSP). The span at 37–47 (DQEEEEEEEGD) shows a compositional bias: acidic residues. The segment at 64–112 (CLICVSSFDGVFKLPKRLDCGHVFCLECLARLSLATAGGGNAVACPVCR) adopts an RING-type zinc-finger fold. A disordered region spans residues 122-181 (GLPALPTQSGLLPRDARAPPSRQGSVRFDRRRGLLYLRPPPPPPGPRKARAPPPPPPLRL). The span at 159 to 179 (RPPPPPPGPRKARAPPPPPPL) shows a compositional bias: pro residues. A helical membrane pass occupies residues 203–223 (ALAVLVAAGLVVSGVYIFFLI). The interval 248–329 (FPPRPPPGSP…RGARRLWGSQ (82 aa)) is disordered. A compositionally biased stretch (acidic residues) spans 281 to 293 (DALEPEAGPEDPA). The segment covering 294–304 (EAERTLDRRSD) has biased composition (basic and acidic residues).

The protein resides in the membrane. This chain is RING finger protein 225, found in Homo sapiens (Human).